The chain runs to 472 residues: POU domain, class 5, transcription factor 1 (472 aa).

Disordered regions lie at residues 127 to 154 (MPSEVKTEKDVEEYGNEENKPPSQYHLT) and 187 to 255 (ISQA…LTTE). The span at 220-234 (TAQNIPSAQAQSAPR) shows a compositional bias: polar residues. The segment covering 235–245 (SSGSSSGGCSN) has biased composition (low complexity). Residues 246-255 (SEEEETLTTE) show a composition bias toward acidic residues. One can recognise a POU-specific domain in the interval 249–323 (EETLTTEDLE…LLQRWLNEAE (75 aa)). Residues 343–402 (KRKRRTSLEGTVRSALESYFVKCPKPNTLEITHISDDLGLERDVVRVWFCNRRQKGKRLA) constitute a DNA-binding region (homeobox).

Belongs to the POU transcription factor family. Class-7 subfamily.

Its subcellular location is the nucleus. Involved in early development of embryos, especially in the process of gastrulation. May play an important role in establishing and specifying rhombomeric segments. Seems to be required to maintain the cells in a highly undifferentiated state. In contrast to POU2, T-POU2 lacks DNA-binding activity because of its incomplete pou domain structure. Overexpression of POU2 does not have any effect on development, whereas overexpression of t-POU2 causes developmental retardation or arrest before gastrulation. The sequence is that of POU domain, class 5, transcription factor 1 (pou5f1) from Danio rerio (Zebrafish).